A 458-amino-acid polypeptide reads, in one-letter code: F-box/WD repeat-containing protein 9 (458 aa).

M1 carries the post-translational modification N-acetylmethionine. Disordered regions lie at residues 1 to 30 (MELPLGRCDDSRTWDDDSDPESETDPDAQA) and 42 to 64 (KSGLAFSRPSQLSTPAASPSASE). Residues 16-26 (DDSDPESETDP) are compositionally biased toward acidic residues. S18 is modified (phosphoserine). Residue T55 is modified to Phosphothreonine. Phosphoserine is present on S59. One can recognise an F-box domain in the interval 76–123 (EPGLLSLPPELLLEICSYLDARLVLHVLSRVCHALRDLVSDHVTWRLR). 7 WD repeats span residues 171–210 (GHVASVDSVLLLQGGSLCLSGSRDRNVNLWDLRQLGTESN), 220–261 (KRNS…QQFG), 264–301 (KASSAVLCLSYLPDILVTGTYDKKVTIYDPRAGPALLK), 305–342 (LHSRPVLTLLADDRHIISGSEDHTLVVVDRRANSVLQR), 344–381 (QLDSYLLCMSYQEPQLWAGDNQGLLHVFANRNGCFQLI), 387–424 (GHSFPITGIQYSVGALYTTSTDKTIRVHVPTDPPRTIC), and 427–458 (RHDNGLNRVCAEGNLVVAGSGDLSLEVWRLQA).

Interacts with SKP1 and CUL1.

Functionally, substrate-recognition component of the SCF (SKP1-CUL1-F-box protein)-type E3 ubiquitin ligase complex. This Homo sapiens (Human) protein is F-box/WD repeat-containing protein 9 (FBXW9).